The sequence spans 919 residues: DNA double-strand break repair Rad50 ATPase (919 aa).

Residues 33-39 (NGAGKST) and Gln143 contribute to the ATP site. Coiled-coil stretches lie at residues 208–268 (MTLR…MLVN), 315–379 (HEVA…RRYT), and 414–458 (ESVL…LEES). The 100-residue stretch at 417–516 (LERLDAVIND…EASRLQDKRR (100 aa)) folds into the Zinc-hook domain. Positions 464 and 467 each coordinate Zn(2+). Coiled-coil stretches lie at residues 486 to 515 (EAER…QDKR), 541 to 595 (EDLA…LQRL), and 635 to 749 (AYRS…RKAS).

Belongs to the SMC family. RAD50 subfamily. As to quaternary structure, homodimer. Forms a heterotetramer composed of two Mre11 subunits and two Rad50 subunits. Zn(2+) is required as a cofactor.

In terms of biological role, part of the Rad50/Mre11 complex, which is involved in the early steps of DNA double-strand break (DSB) repair. The complex may facilitate opening of the processed DNA ends to aid in the recruitment of HerA and NurA. Rad50 controls the balance between DNA end bridging and DNA resection via ATP-dependent structural rearrangements of the Rad50/Mre11 complex. The chain is DNA double-strand break repair Rad50 ATPase from Aeropyrum pernix (strain ATCC 700893 / DSM 11879 / JCM 9820 / NBRC 100138 / K1).